We begin with the raw amino-acid sequence, 219 residues long: Cytochrome c oxidase assembly protein CtaG (219 aa).

Positions 1-13 (MDATDQGKSTSTT) are enriched in polar residues. The tract at residues 1–24 (MDATDQGKSTSTTAAQAAPGKAAP) is disordered. At 1–29 (MDATDQGKSTSTTAAQAAPGKAAPRRGIG) the chain is on the cytoplasmic side. Residues 14 to 24 (AAQAAPGKAAP) are compositionally biased toward low complexity. Residues 30–52 (RDALVGGICGAVVVLMIGASYAA) traverse the membrane as a helical; Signal-anchor for type II membrane protein segment. The Periplasmic segment spans residues 53–219 (VPFYNWFCRA…GEPDKPRGSL (167 aa)).

Belongs to the COX11/CtaG family.

It is found in the cell inner membrane. Exerts its effect at some terminal stage of cytochrome c oxidase synthesis, probably by being involved in the insertion of the copper B into subunit I. The polypeptide is Cytochrome c oxidase assembly protein CtaG (Bradyrhizobium sp. (strain ORS 278)).